The chain runs to 301 residues: Glycine--tRNA ligase alpha subunit (301 aa).

Belongs to the class-II aminoacyl-tRNA synthetase family. In terms of assembly, tetramer of two alpha and two beta subunits.

It localises to the cytoplasm. The enzyme catalyses tRNA(Gly) + glycine + ATP = glycyl-tRNA(Gly) + AMP + diphosphate. This Nitrosospira multiformis (strain ATCC 25196 / NCIMB 11849 / C 71) protein is Glycine--tRNA ligase alpha subunit.